Reading from the N-terminus, the 729-residue chain is Polyphosphate kinase (729 aa).

Positions 1–46 (MTEAQTRTEPSESSESSEAVAPAITSAADSAPEAPPATTAPAIENP) are disordered. Positions 25-42 (TSAADSAPEAPPATTAPA) are enriched in low complexity. Asparagine 90 lines the ATP pocket. Residues arginine 422 and arginine 452 each contribute to the Mg(2+) site. The active-site Phosphohistidine intermediate is the histidine 482. Tyrosine 515, arginine 611, and histidine 639 together coordinate ATP.

This sequence belongs to the polyphosphate kinase 1 (PPK1) family. It depends on Mg(2+) as a cofactor. In terms of processing, an intermediate of this reaction is the autophosphorylated ppk in which a phosphate is covalently linked to a histidine residue through a N-P bond.

It carries out the reaction [phosphate](n) + ATP = [phosphate](n+1) + ADP. In terms of biological role, catalyzes the reversible transfer of the terminal phosphate of ATP to form a long-chain polyphosphate (polyP). In Mycolicibacterium gilvum (strain PYR-GCK) (Mycobacterium gilvum (strain PYR-GCK)), this protein is Polyphosphate kinase.